A 124-amino-acid chain; its full sequence is Small ribosomal subunit protein uS12 (124 aa).

The tract at residues 1-28 (MPTINQLVRKGRTPKVSKTKAPALKGSP) is disordered. A compositionally biased stretch (basic residues) spans 9–18 (RKGRTPKVSK). D89 carries the 3-methylthioaspartic acid modification.

The protein belongs to the universal ribosomal protein uS12 family. As to quaternary structure, part of the 30S ribosomal subunit. Contacts proteins S8 and S17. May interact with IF1 in the 30S initiation complex.

Functionally, with S4 and S5 plays an important role in translational accuracy. In terms of biological role, interacts with and stabilizes bases of the 16S rRNA that are involved in tRNA selection in the A site and with the mRNA backbone. Located at the interface of the 30S and 50S subunits, it traverses the body of the 30S subunit contacting proteins on the other side and probably holding the rRNA structure together. The combined cluster of proteins S8, S12 and S17 appears to hold together the shoulder and platform of the 30S subunit. This is Small ribosomal subunit protein uS12 from Paenarthrobacter aurescens (strain TC1).